The chain runs to 260 residues: Endomucin (260 aa).

Residues 1-18 (MELLQVTILFLLPSICSS) form the signal peptide. 4 N-linked (GlcNAc...) asparagine glycosylation sites follow: Asn-19, Asn-28, Asn-97, and Asn-103. Residues 19-189 (NSTGVLEAAN…TSATSRSYSS (171 aa)) lie on the Extracellular side of the membrane. 2 stretches are compositionally biased toward polar residues: residues 119-133 (QSSK…SIKT) and 145-170 (ASPS…SQVI). The segment at 119–182 (QSSKPKTETQ…EGGKNASTSA (64 aa)) is disordered. N-linked (GlcNAc...) asparagine glycans are attached at residues Asn-163 and Asn-177. A helical membrane pass occupies residues 190–210 (IILPVVIALIVITLSVFVLVG). Over 211–260 (LYRMCWKADPGTPENGNDQPQSDKESVKLLTVKTISHESGEHSAQGKTKN) the chain is Cytoplasmic. The residue at position 236 (Ser-236) is a Phosphoserine.

Post-translationally, highly O-glycosylated. Sialic acid-rich glycoprotein.

It localises to the membrane. Functionally, endothelial sialomucin, also called endomucin or mucin-like sialoglycoprotein, which interferes with the assembly of focal adhesion complexes and inhibits interaction between cells and the extracellular matrix. This Pongo abelii (Sumatran orangutan) protein is Endomucin (EMCN).